A 129-amino-acid chain; its full sequence is Small ribosomal subunit protein uS11c (129 aa).

The protein belongs to the universal ribosomal protein uS11 family. As to quaternary structure, part of the 30S ribosomal subunit.

The protein resides in the plastid. The protein localises to the chloroplast. This chain is Small ribosomal subunit protein uS11c, found in Oltmannsiellopsis viridis (Marine flagellate).